A 70-amino-acid chain; its full sequence is MKSGIHPDYVETTVLCGCGASFTTRSTKKSGNITVEVCSQCHPFYTGKQKILDSGGRVARFEKRYGKRSK.

Zn(2+) is bound by residues C16, C18, C38, and C41.

Belongs to the bacterial ribosomal protein bL31 family. Type A subfamily. Part of the 50S ribosomal subunit. Requires Zn(2+) as cofactor.

In terms of biological role, binds the 23S rRNA. The sequence is that of Large ribosomal subunit protein bL31 from Mycolicibacterium gilvum (strain PYR-GCK) (Mycobacterium gilvum (strain PYR-GCK)).